The sequence spans 1691 residues: MLINKLWLLLVTLCLTEELAAAGEKSYGKPCGGQDCSGSCQCFPEKGARGRPGPIGIQGPTGPQGFTGSTGLSGLKGERGFPGLLGPYGPKGDKGPMGVPGFLGINGIPGHPGQPGPRGPPGLDGCNGTQGAVGFPGPDGYPGLLGPPGLPGQKGSKGDPVLAPGSFKGMKGDPGLPGLDGITGPQGAPGFPGAVGPAGPPGLQGPPGPPGPLGPDGNMGLGFQGEKGVKGDVGLPGPAGPPPSTGELEFMGFPKGKKGSKGEPGPKGFPGISGPPGFPGLGTTGEKGEKGEKGIPGLPGPRGPMGSEGVQGPPGQQGKKGTLGFPGLNGFQGIEGQKGDIGLPGPDVFIDIDGAVISGNPGDPGVPGLPGLKGDEGIQGLRGPSGVPGLPALSGVPGALGPQGFPGLKGDQGNPGRTTIGAAGLPGRDGLPGPPGPPGPPSPEFETETLHNKESGFPGLRGEQGPKGNLGLKGIKGDSGFCACDGGVPNTGPPGEPGPPGPWGLIGLPGLKGARGDRGSGGAQGPAGAPGLVGPLGPSGPKGKKGEPILSTIQGMPGDRGDSGSQGFRGVIGEPGKDGVPGLPGLPGLPGDGGQGFPGEKGLPGLPGEKGHPGPPGLPGNGLPGLPGPRGLPGDKGKDGLPGQQGLPGSKGITLPCIIPGSYGPSGFPGTPGFPGPKGSRGLPGTPGQPGSSGSKGEPGSPGLVHLPELPGFPGPRGEKGLPGFPGLPGKDGLPGMIGSPGLPGSKGATGDIFGAENGAPGEQGLQGLTGHKGFLGDSGLPGLKGVHGKPGLLGPKGERGSPGTPGQVGQPGTPGSSGPYGIKGKSGLPGAPGFPGISGHPGKKGTRGKKGPPGSIVKKGLPGLKGLPGNPGLVGLKGSPGSPGVAGLPALSGPKGEKGSVGFVGFPGIPGLPGIPGTRGLKGIPGSTGKMGPSGRAGTPGEKGDRGNPGPVGIPSPRRPMSNLWLKGDKGSQGSAGSNGFPGPRGDKGEAGRPGPPGLPGAPGLPGIIKGVSGKPGPPGFMGIRGLPGLKGSSGITGFPGMPGESGSQGIRGSPGLPGASGLPGLKGDNGQTVEISGSPGPKGQPGESGFKGTKGRDGLIGNIGFPGNKGEDGKVGVSGDVGLPGAPGFPGVAGMRGEPGLPGSSGHQGAIGPLGSPGLIGPKGFPGFPGLHGLNGLPGTKGTHGTPGPSITGVPGPAGLPGPKGEKGYPGIGIGAPGKPGLRGQKGDRGFPGLQGPAGLPGAPGISLPSLIAGQPGDPGRPGLDGERGRPGPAGPPGPPGPSSNQGDTGDPGFPGIPGPKGPKGDQGIPGFSGLPGELGLKGMRGEPGFMGTPGKVGPPGDPGFPGMKGKAGPRGSSGLQGDPGQTPTAEAVQVPPGPLGLPGIDGIPGLTGDPGAQGPVGLQGSKGLPGIPGKDGPSGLPGPPGALGDPGLPGLQGPPGFEGAPGQQGPFGMPGMPGQSMRVGYTLVKHSQSEQVPPCPIGMSQLWVGYSLLFVEGQEKAHNQDLGFAGSCLPRFSTMPFIYCNINEVCHYARRNDKSYWLSTTAPIPMMPVSQTQIPQYISRCSVCEAPSQAIAVHSQDITIPQCPLGWRSLWIGYSFLMHTAAGAEGGGQSLVSPGSCLEDFRATPFIECSGARGTCHYFANKYSFWLTTVEERQQFGELPVSETLKAGQLHTRVSRCQVCMKSL.

The first 22 residues, 1–22, serve as a signal peptide directing secretion; the sequence is MLINKLWLLLVTLCLTEELAAA. The tract at residues 23–46 is 7S domain; that stretch reads GEKSYGKPCGGQDCSGSCQCFPEK. Residues 47–1463 form a triple-helical region region; the sequence is GARGRPGPIG…FGMPGMPGQS (1417 aa). 5 disordered regions span residues 108-338, 404-473, 486-881, 915-1099, and 1185-1459; these read IPGH…EGQK, GFPG…LGLK, GGVP…KGSP, GIPG…KGRD, and THGT…MPGM. Asparagine 127 carries an N-linked (GlcNAc...) asparagine glycan. Residues 185-197 show a composition bias toward low complexity; the sequence is PQGAPGFPGAVGP. Over residues 198–213 the composition is skewed to pro residues; the sequence is AGPPGLQGPPGPPGPL. Low complexity-rich tracts occupy residues 311 to 320 and 421 to 431; these read QGPPGQQGKK and GAAGLPGRDGL. Pro residues-rich tracts occupy residues 432 to 443 and 491 to 502; these read PGPPGPPGPPSP and TGPPGEPGPPGP. The segment covering 503–512 has biased composition (low complexity); sequence WGLIGLPGLK. Residues 515–517 carry the Cell attachment site motif; it reads RGD. Positions 526–541 are enriched in low complexity; the sequence is PAGAPGLVGPLGPSGP. Residues 560–562 carry the Cell attachment site motif; it reads RGD. Positions 588–599 are enriched in gly residues; that stretch reads GLPGDGGQGFPG. Low complexity-rich tracts occupy residues 641–652, 660–703, 722–735, and 802–820; these read LPGQQGLPGSKG, PGSY…GSPG, LPGFPGLPGKDGLP, and SPGTPGQVGQPGTPGSSGP. The segment covering 842 to 851 has biased composition (basic residues); sequence PGKKGTRGKK. Positions 853–878 are enriched in low complexity; that stretch reads PPGSIVKKGLPGLKGLPGNPGLVGLK. Residues 986 to 988 carry the Cell attachment site motif; sequence RGD. Over residues 1055 to 1068 the composition is skewed to low complexity; it reads SPGLPGASGLPGLK. The segment covering 1210-1220 has biased composition (gly residues); it reads GYPGIGIGAPG. The segment covering 1234 to 1253 has biased composition (low complexity); sequence PGLQGPAGLPGAPGISLPSL. Over residues 1275–1284 the composition is skewed to pro residues; that stretch reads PAGPPGPPGP. Positions 1360–1371 are enriched in polar residues; that stretch reads SGLQGDPGQTPT. Composition is skewed to low complexity over residues 1384-1397 and 1429-1459; these read LPGIDGIPGLTGDP and ALGDPGLPGLQGPPGFEGAPGQQGPFGMPGM. The Collagen IV NC1 domain maps to 1467–1691; the sequence is GYTLVKHSQS…SRCQVCMKSL (225 aa). 6 disulfide bridges follow: cysteine 1482–cysteine 1571, cysteine 1515–cysteine 1568, cysteine 1527–cysteine 1533, cysteine 1590–cysteine 1687, cysteine 1624–cysteine 1684, and cysteine 1636–cysteine 1643.

The protein belongs to the type IV collagen family. In terms of assembly, there are six type IV collagen isoforms, alpha 1(IV)-alpha 6(IV), each of which can form a triple helix structure with 2 other chains to generate type IV collagen network. Post-translationally, prolines at the third position of the tripeptide repeating unit (G-X-Y) are hydroxylated in some or all of the chains. Type IV collagens contain numerous cysteine residues which are involved in inter- and intramolecular disulfide bonding. 12 of these, located in the NC1 domain, are conserved in all known type IV collagens. In terms of processing, the trimeric structure of the NC1 domains is stabilized by covalent bonds between Lys and Met residues.

It localises to the secreted. It is found in the extracellular space. The protein localises to the extracellular matrix. The protein resides in the basement membrane. Its function is as follows. Type IV collagen is the major structural component of glomerular basement membranes (GBM), forming a 'chicken-wire' meshwork together with laminins, proteoglycans and entactin/nidogen. This chain is Collagen alpha-6(IV) chain (COL4A6), found in Homo sapiens (Human).